Here is a 177-residue protein sequence, read N- to C-terminus: Prorelaxin (177 aa).

A signal peptide spans M1–A22. Intrachain disulfides connect C36/C164, C48/C177, and C163/C168. Positions M64–S149 are cleaved as a propeptide — connecting peptide. The tract at residues F80–S114 is disordered. Residues P102–S114 are compositionally biased toward polar residues.

The protein belongs to the insulin family. In terms of assembly, heterodimer of a B chain and an A chain linked by two disulfide bonds.

It localises to the secreted. Its function is as follows. Relaxin is an ovarian hormone that acts with estrogen to produce dilatation of the birth canal in many mammals. It bears mature young, and allows separation of the pelvic bones. In Mesocricetus auratus (Golden hamster), this protein is Prorelaxin (RLN).